Reading from the N-terminus, the 235-residue chain is 1-(5-phosphoribosyl)-5-[(5-phosphoribosylamino)methylideneamino] imidazole-4-carboxamide isomerase (235 aa).

The active-site Proton acceptor is the aspartate 8. Aspartate 128 acts as the Proton donor in catalysis.

Belongs to the HisA/HisF family.

Its subcellular location is the cytoplasm. It carries out the reaction 1-(5-phospho-beta-D-ribosyl)-5-[(5-phospho-beta-D-ribosylamino)methylideneamino]imidazole-4-carboxamide = 5-[(5-phospho-1-deoxy-D-ribulos-1-ylimino)methylamino]-1-(5-phospho-beta-D-ribosyl)imidazole-4-carboxamide. The protein operates within amino-acid biosynthesis; L-histidine biosynthesis; L-histidine from 5-phospho-alpha-D-ribose 1-diphosphate: step 4/9. The sequence is that of 1-(5-phosphoribosyl)-5-[(5-phosphoribosylamino)methylideneamino] imidazole-4-carboxamide isomerase from Thermus thermophilus (strain ATCC 27634 / DSM 579 / HB8).